Consider the following 411-residue polypeptide: Argininosuccinate synthase (411 aa).

ATP-binding positions include 15–23 (AYSGGLDTS) and Ala-42. 2 residues coordinate L-citrulline: Tyr-93 and Ser-98. Gly-123 lines the ATP pocket. L-aspartate contacts are provided by Thr-125, Asn-129, and Asp-130. Asn-129 contributes to the L-citrulline binding site. 5 residues coordinate L-citrulline: Arg-133, Ser-185, Ser-194, Glu-270, and Tyr-282.

This sequence belongs to the argininosuccinate synthase family. Type 1 subfamily. As to quaternary structure, homotetramer.

It localises to the cytoplasm. The enzyme catalyses L-citrulline + L-aspartate + ATP = 2-(N(omega)-L-arginino)succinate + AMP + diphosphate + H(+). The protein operates within amino-acid biosynthesis; L-arginine biosynthesis; L-arginine from L-ornithine and carbamoyl phosphate: step 2/3. This chain is Argininosuccinate synthase, found in Psychrobacter sp. (strain PRwf-1).